A 341-amino-acid chain; its full sequence is Endoglucanase 1 (341 aa).

The N-terminal stretch at 1–16 (MKTATLLAALSVLAGA) is a signal peptide. The propeptide occupies 17-30 (LAAPLAGDSALHRR). Residue glutamate 166 is the Proton donor of the active site. Residue glutamate 275 is the Nucleophile of the active site.

It belongs to the glycosyl hydrolase 5 (cellulase A) family.

It catalyses the reaction Endohydrolysis of (1-&gt;4)-beta-D-glucosidic linkages in cellulose, lichenin and cereal beta-D-glucans.. Functionally, has endoglucanase activity on carboxymethyl-cellulose (CMC). In Saitozyma flava (Cryptococcus flavus), this protein is Endoglucanase 1 (CMC1).